Consider the following 182-residue polypeptide: ATP synthase subunit b, chloroplastic (182 aa).

Residues 36–56 form a helical membrane-spanning segment; that stretch reads ILLLLLGLMYVLKEFLGSILV.

Belongs to the ATPase B chain family. In terms of assembly, F-type ATPases have 2 components, F(1) - the catalytic core - and F(0) - the membrane proton channel. F(1) has five subunits: alpha(3), beta(3), gamma(1), delta(1), epsilon(1). F(0) has four main subunits: a(1), b(1), b'(1) and c(10-14). The alpha and beta chains form an alternating ring which encloses part of the gamma chain. F(1) is attached to F(0) by a central stalk formed by the gamma and epsilon chains, while a peripheral stalk is formed by the delta, b and b' chains.

The protein localises to the plastid. The protein resides in the chloroplast thylakoid membrane. F(1)F(0) ATP synthase produces ATP from ADP in the presence of a proton or sodium gradient. F-type ATPases consist of two structural domains, F(1) containing the extramembraneous catalytic core and F(0) containing the membrane proton channel, linked together by a central stalk and a peripheral stalk. During catalysis, ATP synthesis in the catalytic domain of F(1) is coupled via a rotary mechanism of the central stalk subunits to proton translocation. Functionally, component of the F(0) channel, it forms part of the peripheral stalk, linking F(1) to F(0). The protein is ATP synthase subunit b, chloroplastic of Gracilaria tenuistipitata var. liui (Red alga).